A 984-amino-acid polypeptide reads, in one-letter code: Glycine dehydrogenase (decarboxylating) (984 aa).

K702 is subject to N6-(pyridoxal phosphate)lysine.

It belongs to the GcvP family. As to quaternary structure, the glycine cleavage system is composed of four proteins: P, T, L and H. Pyridoxal 5'-phosphate is required as a cofactor.

It catalyses the reaction N(6)-[(R)-lipoyl]-L-lysyl-[glycine-cleavage complex H protein] + glycine + H(+) = N(6)-[(R)-S(8)-aminomethyldihydrolipoyl]-L-lysyl-[glycine-cleavage complex H protein] + CO2. In terms of biological role, the glycine cleavage system catalyzes the degradation of glycine. The P protein binds the alpha-amino group of glycine through its pyridoxal phosphate cofactor; CO(2) is released and the remaining methylamine moiety is then transferred to the lipoamide cofactor of the H protein. The sequence is that of Glycine dehydrogenase (decarboxylating) from Xanthomonas oryzae pv. oryzae (strain MAFF 311018).